The sequence spans 140 residues: Transcription antitermination protein NusB (140 aa).

It belongs to the NusB family.

Involved in transcription antitermination. Required for transcription of ribosomal RNA (rRNA) genes. Binds specifically to the boxA antiterminator sequence of the ribosomal RNA (rrn) operons. This Streptococcus pneumoniae (strain 70585) protein is Transcription antitermination protein NusB.